A 345-amino-acid polypeptide reads, in one-letter code: L-threonine 3-dehydrogenase (345 aa).

Position 42 (cysteine 42) interacts with Zn(2+). Catalysis depends on charge relay system residues threonine 44 and histidine 47. Histidine 67, glutamate 68, cysteine 97, cysteine 100, cysteine 103, and cysteine 111 together coordinate Zn(2+). NAD(+) is bound by residues isoleucine 179, aspartate 199, arginine 204, 266 to 268 (LGI), and 290 to 291 (IY).

It belongs to the zinc-containing alcohol dehydrogenase family. In terms of assembly, homotetramer. It depends on Zn(2+) as a cofactor.

It is found in the cytoplasm. The catalysed reaction is L-threonine + NAD(+) = (2S)-2-amino-3-oxobutanoate + NADH + H(+). It participates in amino-acid degradation; L-threonine degradation via oxydo-reductase pathway; glycine from L-threonine: step 1/2. Functionally, catalyzes the NAD(+)-dependent oxidation of L-threonine to 2-amino-3-ketobutyrate. This chain is L-threonine 3-dehydrogenase, found in Sinorhizobium fredii (strain NBRC 101917 / NGR234).